The following is a 1191-amino-acid chain: DNA-directed RNA polymerase subunit beta (1191 aa).

Positions 1164–1191 are disordered; sequence EEEDLQPADALNIAPQPDTEEEPVESFE. Residues 1181–1191 are compositionally biased toward acidic residues; it reads DTEEEPVESFE.

Belongs to the RNA polymerase beta chain family. The RNAP catalytic core consists of 2 alpha, 1 beta, 1 beta' and 1 omega subunit. When a sigma factor is associated with the core the holoenzyme is formed, which can initiate transcription.

The catalysed reaction is RNA(n) + a ribonucleoside 5'-triphosphate = RNA(n+1) + diphosphate. In terms of biological role, DNA-dependent RNA polymerase catalyzes the transcription of DNA into RNA using the four ribonucleoside triphosphates as substrates. In Lysinibacillus sphaericus (strain C3-41), this protein is DNA-directed RNA polymerase subunit beta.